A 139-amino-acid chain; its full sequence is Large ribosomal subunit protein uL16 (139 aa).

Positions 1 to 17 are enriched in basic residues; sequence MLMPKRVKYRKTQRGRM. Residues 1–24 are disordered; the sequence is MLMPKRVKYRKTQRGRMKGNSGRG.

Belongs to the universal ribosomal protein uL16 family. As to quaternary structure, part of the 50S ribosomal subunit.

In terms of biological role, binds 23S rRNA and is also seen to make contacts with the A and possibly P site tRNAs. This chain is Large ribosomal subunit protein uL16, found in Pelodictyon phaeoclathratiforme (strain DSM 5477 / BU-1).